Consider the following 268-residue polypeptide: NH(3)-dependent NAD(+) synthetase (268 aa).

Glycine 45–serine 52 provides a ligand contact to ATP. A Mg(2+)-binding site is contributed by aspartate 51. Deamido-NAD(+) is bound at residue arginine 129. Residue threonine 149 participates in ATP binding. Glutamate 154 provides a ligand contact to Mg(2+). Positions 162 and 169 each coordinate deamido-NAD(+). ATP is bound by residues lysine 178 and threonine 200. Histidine 260–lysine 261 provides a ligand contact to deamido-NAD(+).

This sequence belongs to the NAD synthetase family. As to quaternary structure, homodimer.

It carries out the reaction deamido-NAD(+) + NH4(+) + ATP = AMP + diphosphate + NAD(+) + H(+). It functions in the pathway cofactor biosynthesis; NAD(+) biosynthesis; NAD(+) from deamido-NAD(+) (ammonia route): step 1/1. Its function is as follows. Catalyzes the ATP-dependent amidation of deamido-NAD to form NAD. Uses ammonia as a nitrogen source. The polypeptide is NH(3)-dependent NAD(+) synthetase (Halobacterium salinarum (strain ATCC 29341 / DSM 671 / R1)).